The primary structure comprises 215 residues: Holliday junction branch migration complex subunit RuvA (215 aa).

The segment at 1 to 67 (MIGWLQGERI…DDGSTLFGFC (67 aa)) is domain I. The tract at residues 68-146 (DQQERDLFRT…NWAPLQEPSL (79 aa)) is domain II. The interval 147–158 (SLVDRSDVKAIP) is flexible linker. Residues 159–215 (LGEPCLRDLQITLETLGYEDLEIRRAMRAVASGPDVPAEDDGDAWLRASLKWLSQSA) form a domain III region.

This sequence belongs to the RuvA family. Homotetramer. Forms an RuvA(8)-RuvB(12)-Holliday junction (HJ) complex. HJ DNA is sandwiched between 2 RuvA tetramers; dsDNA enters through RuvA and exits via RuvB. An RuvB hexamer assembles on each DNA strand where it exits the tetramer. Each RuvB hexamer is contacted by two RuvA subunits (via domain III) on 2 adjacent RuvB subunits; this complex drives branch migration. In the full resolvosome a probable DNA-RuvA(4)-RuvB(12)-RuvC(2) complex forms which resolves the HJ.

Its subcellular location is the cytoplasm. In terms of biological role, the RuvA-RuvB-RuvC complex processes Holliday junction (HJ) DNA during genetic recombination and DNA repair, while the RuvA-RuvB complex plays an important role in the rescue of blocked DNA replication forks via replication fork reversal (RFR). RuvA specifically binds to HJ cruciform DNA, conferring on it an open structure. The RuvB hexamer acts as an ATP-dependent pump, pulling dsDNA into and through the RuvAB complex. HJ branch migration allows RuvC to scan DNA until it finds its consensus sequence, where it cleaves and resolves the cruciform DNA. The chain is Holliday junction branch migration complex subunit RuvA from Synechococcus sp. (strain WH7803).